Reading from the N-terminus, the 111-residue chain is Small ribosomal subunit protein bS16 (111 aa).

The interval 92-111 is disordered; it reads MEVKAKNRKARPSKKEDKEA.

The protein belongs to the bacterial ribosomal protein bS16 family.

In Rickettsia massiliae (strain Mtu5), this protein is Small ribosomal subunit protein bS16.